We begin with the raw amino-acid sequence, 1012 residues long: DNA polymerase catalytic subunit (1012 aa).

The interval 1-31 (MDFFNPFIDPTRGGPRNTVRQPTPSQSPTVP) is disordered. Residues 21-31 (QPTPSQSPTVP) are compositionally biased toward low complexity.

This sequence belongs to the DNA polymerase type-B family. Forms a complex with the ssDNA-binding protein, the DNA polymerase processivity factor, and the alkaline exonuclease. Interacts with the putative helicase-primase complex subunit; this interaction may coordinate leading and lagging strand DNA synthesis at the replication fork.

The protein resides in the host nucleus. It catalyses the reaction DNA(n) + a 2'-deoxyribonucleoside 5'-triphosphate = DNA(n+1) + diphosphate. The enzyme catalyses Endonucleolytic cleavage to 5'-phosphomonoester.. Functionally, replicates viral genomic DNA. The replication complex is composed of six viral proteins: the DNA polymerase, processivity factor, primase, primase-associated factor, helicase, and ssDNA-binding protein. Additionally, the polymerase contains an intrinsic ribonuclease H (RNase H) activity that specifically degrades RNA/DNA heteroduplexes or duplex DNA substrates in the 5' to 3' direction. Therefore, it can catalyze the excision of the RNA primers that initiate the synthesis of Okazaki fragments at a replication fork during viral DNA replication. The sequence is that of DNA polymerase catalytic subunit (ORF9) from Human herpesvirus 8 type P (isolate GK18) (HHV-8).